Consider the following 229-residue polypeptide: Enolase-phosphatase E1 (229 aa).

The protein belongs to the HAD-like hydrolase superfamily. MasA/MtnC family. Monomer. Mg(2+) is required as a cofactor.

The enzyme catalyses 5-methylsulfanyl-2,3-dioxopentyl phosphate + H2O = 1,2-dihydroxy-5-(methylsulfanyl)pent-1-en-3-one + phosphate. It functions in the pathway amino-acid biosynthesis; L-methionine biosynthesis via salvage pathway; L-methionine from S-methyl-5-thio-alpha-D-ribose 1-phosphate: step 3/6. It participates in amino-acid biosynthesis; L-methionine biosynthesis via salvage pathway; L-methionine from S-methyl-5-thio-alpha-D-ribose 1-phosphate: step 4/6. Functionally, bifunctional enzyme that catalyzes the enolization of 2,3-diketo-5-methylthiopentyl-1-phosphate (DK-MTP-1-P) into the intermediate 2-hydroxy-3-keto-5-methylthiopentenyl-1-phosphate (HK-MTPenyl-1-P), which is then dephosphorylated to form the acireductone 1,2-dihydroxy-3-keto-5-methylthiopentene (DHK-MTPene). In Serratia proteamaculans (strain 568), this protein is Enolase-phosphatase E1.